A 164-amino-acid polypeptide reads, in one-letter code: Protein SprT (164 aa).

In terms of domain architecture, SprT-like spans Gln-14–Val-156. His-69 contributes to the Zn(2+) binding site. Glu-70 is an active-site residue. Zn(2+) is bound at residue His-73.

Belongs to the SprT family. The cofactor is Zn(2+).

The protein resides in the cytoplasm. The polypeptide is Protein SprT (Pseudomonas putida (strain W619)).